The sequence spans 449 residues: Naphthalene 1,2-dioxygenase system, large oxygenase component (449 aa).

Residues 39–137 (WLFLTHDSLI…LDKKCMGLKE (99 aa)) enclose the Rieske domain. Residues Cys-81, His-83, Cys-101, and His-104 each contribute to the [2Fe-2S] cluster site. His-208, His-213, and Asp-362 together coordinate Fe cation.

Belongs to the bacterial ring-hydroxylating dioxygenase alpha subunit family. In terms of assembly, the naphthalene dioxygenase (NDO) multicomponent enzyme system is composed of an electron transfer component and a dioxygenase component (iron sulfur protein (ISP)). The electron transfer component is composed of a ferredoxin reductase (NdoR) and a ferredoxin (NdoA), and the dioxygenase component is formed of a heterohexamer (trimer of heterodimers) of three large alpha subunits (NdoB) and three small beta subunits (NdoC). [2Fe-2S] cluster serves as cofactor. Requires Fe(2+) as cofactor.

The catalysed reaction is naphthalene + NADH + O2 + H(+) = (1R,2S)-1,2-dihydronaphthalene-1,2-diol + NAD(+). It participates in aromatic compound metabolism; naphthalene degradation. In terms of biological role, component of the naphthalene dioxygenase (NDO) multicomponent enzyme system which catalyzes the incorporation of both atoms of molecular oxygen into naphthalene to form cis-(1R,2S)-dihydroxy-1,2-dihydronaphthalene. The alpha subunit has a catalytic role in the holoenzyme. This chain is Naphthalene 1,2-dioxygenase system, large oxygenase component, found in Pseudomonas aeruginosa.